We begin with the raw amino-acid sequence, 2179 residues long: Voltage-dependent L-type calcium channel subunit alpha-1D (2179 aa).

Disordered regions lie at residues 1–21 (MMMM…EDHA), 30–49 (TRLP…SKQT), and 64–100 (KAAQ…SSNS). Residues 1-126 (MMMMMMMKKM…RACISIVEWK (126 aa)) are Cytoplasmic-facing. The segment covering 38–49 (GPTSQPNSSKQT) has biased composition (polar residues). Positions 82 to 93 (QRKRQQYAKSKK) are enriched in basic residues. The stretch at 113 to 409 (NPIRRACISI…LVLGVLSGEF (297 aa)) is one I repeat. The chain crosses the membrane as a helical span at residues 127–145 (PFDIFILLAIFANCVALAI). Residues 146–163 (YIPFPEDDSNSTNHNLEK) lie on the Extracellular side of the membrane. Residues 164 to 183 (VEYAFLIIFTVETFLKIIAY) traverse the membrane as a helical segment. Residues 184-195 (GLLLHPNAYVRN) are Cytoplasmic-facing. The chain crosses the membrane as a helical span at residues 196 to 214 (GWNLLDFVIVIVGLFSVIL). The Extracellular portion of the chain corresponds to 215–235 (EQLTKETEGGNHSSGKSGGFD). Residues 236–254 (VKALRAFRVLRPLRLVSGV) traverse the membrane as a helical segment. At 255–273 (PSLQVVLNSIIKAMVPLLH) the chain is on the cytoplasmic side. Residues 274 to 293 (IALLVLFVIIIYAIIGLELF) form a helical membrane-spanning segment. The Extracellular segment spans residues 294-381 (IGKMHKTCFF…WVNDAIGWEW (88 aa)). Glu364 is a binding site for Ca(2+). A helical membrane pass occupies residues 382 to 406 (PWVYFVSLIILGSFFVLNLVLGVLS). Over 407-543 (GEFSKEREKA…RRCRAAVKSV (137 aa)) the chain is Cytoplasmic. A binding to the beta subunit region spans residues 429–446 (QQLEEDLKGYLDWITQAE). The segment at 449–480 (DPENEEEGGEEGKRNTSMPTSETESVNTENVS) is disordered. Residues 463–479 (NTSMPTSETESVNTENV) show a composition bias toward polar residues. An II repeat occupies 529-775 (NRFNRRRCRA…VFLAIAVDNL (247 aa)). The chain crosses the membrane as a helical span at residues 544 to 563 (TFYWLVIVLVFLNTLTISSE). At 564–578 (HYNQPDWLTQIQDIA) the chain is on the extracellular side. Residues 579-597 (NKVLLALFTCEMLVKMYSL) traverse the membrane as a helical segment. Residues 598–605 (GLQAYFVS) are Cytoplasmic-facing. A helical membrane pass occupies residues 606-624 (LFNRFDCFVVCGGITETIL). The Extracellular segment spans residues 625–634 (VELELMSPLG). The chain crosses the membrane as a helical span at residues 635–653 (VSVFRCVRLLRIFKVTRHW). The Cytoplasmic portion of the chain corresponds to 654 to 672 (TSLSNLVASLLNSMKSIAS). The chain crosses the membrane as a helical span at residues 673–693 (LLLLLFLFIIIFSLLGMQLFG). Over 694 to 747 (GKFNFDETQTKRSTFDNFPQALLTVFQILTGEDWNAVMYDGIMAYGGPSSSGMI) the chain is Extracellular. Glu725 serves as a coordination point for Ca(2+). The chain crosses the membrane as a helical span at residues 748-772 (VCIYFIILFICGNYILLNVFLAIAV). A coiled-coil region spans residues 771–810 (AVDNLADAESLNTAQKEEAEEKERKKIARKESLENKKNNK). Over 773 to 906 (DNLADAESLN…VGCHKLINHH (134 aa)) the chain is Cytoplasmic. A compositionally biased stretch (basic and acidic residues) spans 786 to 810 (KEEAEEKERKKIARKESLENKKNNK). Residues 786-870 (KEEAEEKERK…AGPRPRRISE (85 aa)) form a disordered region. Positions 811–822 (PEVNQIANSDNK) are enriched in polar residues. Acidic residues predominate over residues 845–858 (VGEEEEEEEEDEPE). Residues 893–1175 (NPIRVGCHKL…IFVGFVIVTF (283 aa)) form an III repeat. Residues 907 to 925 (IFTNLILVFIMLSSAALAA) form a helical membrane-spanning segment. At 926–941 (EDPIRSHSFRNTILGY) the chain is on the extracellular side. A helical transmembrane segment spans residues 942–961 (FDYAFTAIFTVEILLKMTTF). The Cytoplasmic portion of the chain corresponds to 962–973 (GAFLHKGAFCRN). Residues 974 to 992 (YFNLLDMLVVGVSLVSFGI) traverse the membrane as a helical segment. Residues 993–998 (QSSAIS) lie on the Extracellular side of the membrane. Residues 999–1018 (VVKILRVLRVLRPLRAINRA) traverse the membrane as a helical segment. The Cytoplasmic portion of the chain corresponds to 1019 to 1037 (KGLKHVVQCVFVAIRTIGN). Residues 1038–1057 (IMIVTTLLQFMFACIGVQLF) form a helical membrane-spanning segment. The Extracellular portion of the chain corresponds to 1058-1147 (KGKFYRCTDE…VGPVYNYRVE (90 aa)). A dihydropyridine binding region spans residues 1095 to 1185 (RIWQNSDFNF…QEQGEKEYKN (91 aa)). Glu1121 serves as a coordination point for Ca(2+). The chain crosses the membrane as a helical span at residues 1148–1168 (ISIFFIIYIIIVAFFMMNIFV). Over 1169–1225 (GFVIVTFQEQGEKEYKNCELDKNQRQCVEYALKARPLRRYIPKNPYQYKFWYVVNSS) the chain is Cytoplasmic. Residues 1212-1487 (NPYQYKFWYV…LFVAVIMDNF (276 aa)) form an IV repeat. The chain crosses the membrane as a helical span at residues 1226 to 1244 (PFEYMMFVLIMLNTLCLAM). The Extracellular portion of the chain corresponds to 1245-1259 (QHYEQSKMFNDAMDI). Residues 1260-1279 (LNMVFTGVFTVEMVLKVIAF) traverse the membrane as a helical segment. At 1280–1286 (KPKGYFS) the chain is on the cytoplasmic side. The chain crosses the membrane as a helical span at residues 1287-1308 (DAWNTFDSLIVIGSIIDVALSE). Over 1309–1333 (ADPSESETIPLPTATPGNSEESNRI) the chain is Extracellular. Residues 1334–1353 (SITFFRLFRVMRLVKLLSRG) traverse the membrane as a helical segment. Over 1354–1372 (EGIRTLLWTFIKSFQALPY) the chain is Cytoplasmic. A helical membrane pass occupies residues 1373 to 1392 (VALLIAMLFFIYAVIGMQMF). The Extracellular portion of the chain corresponds to 1393–1459 (GKVAMRDNNQ…GEEYTCGSNF (67 aa)). The dihydropyridine binding stretch occupies residues 1440-1506 (LCDPDSDYNP…LGPHHLDEFK (67 aa)). Residues 1452-1495 (EYTCGSNFAIVYFISFYMLCAFLIINLFVAVIMDNFDYLTRDWS) form a phenylalkylamine binding region. The chain crosses the membrane as a helical span at residues 1460-1484 (AIVYFISFYMLCAFLIINLFVAVIM). At 1485–2179 (DNFDYLTRDW…ADEMICITTL (695 aa)) the chain is on the cytoplasmic side. Disordered regions lie at residues 1704–1789 (LLGN…AHGK), 1896–1941 (FERP…RSSF), and 2135–2171 (GDMG…DLAD). The span at 1764–1782 (SIGKQAPTSTNANLNNANM) shows a compositional bias: polar residues. Acidic residues predominate over residues 2156-2171 (SDEEPDPGREEEDLAD).

Belongs to the calcium channel alpha-1 subunit (TC 1.A.1.11) family. CACNA1D subfamily. Voltage-dependent calcium channels are multisubunit complexes, consisting of alpha-1, alpha-2, beta and delta subunits in a 1:1:1:1 ratio. The channel activity is directed by the pore-forming and voltage-sensitive alpha-1 subunit. In many cases, this subunit is sufficient to generate voltage-sensitive calcium channel activity. The auxiliary subunits beta and alpha-2/delta linked by a disulfide bridge regulate the channel activity. Interacts (via IQ domain) with CABP1 and CABP4 in a calcium independent manner. Interacts with RIMBP2. Expressed in the inner hair cells (IHC) of the cochlea.

The protein resides in the membrane. The enzyme catalyses Ca(2+)(in) = Ca(2+)(out). In terms of biological role, voltage-sensitive calcium channels (VSCC) mediate the entry of calcium ions into excitable cells and are also involved in a variety of calcium-dependent processes, including muscle contraction, hormone or neurotransmitter release, gene expression, cell motility, cell division and cell death. The isoform alpha-1D gives rise to L-type calcium currents. Long-lasting (L-type) calcium channels belong to the 'high-voltage activated' (HVA) group. They are blocked by dihydropyridines (DHP), phenylalkylamines, and by benzothiazepines. This chain is Voltage-dependent L-type calcium channel subunit alpha-1D (Cacna1d), found in Mus musculus (Mouse).